The sequence spans 263 residues: 4-hydroxy-tetrahydrodipicolinate reductase (263 aa).

NAD(+)-binding positions include 7 to 12 (GFKGRM), 96 to 98 (GTT), and 122 to 125 (APNF). His152 serves as the catalytic Proton donor/acceptor. His153 provides a ligand contact to (S)-2,3,4,5-tetrahydrodipicolinate. Catalysis depends on Lys156, which acts as the Proton donor. A (S)-2,3,4,5-tetrahydrodipicolinate-binding site is contributed by 162–163 (GT).

The protein belongs to the DapB family.

It localises to the cytoplasm. The catalysed reaction is (S)-2,3,4,5-tetrahydrodipicolinate + NAD(+) + H2O = (2S,4S)-4-hydroxy-2,3,4,5-tetrahydrodipicolinate + NADH + H(+). It catalyses the reaction (S)-2,3,4,5-tetrahydrodipicolinate + NADP(+) + H2O = (2S,4S)-4-hydroxy-2,3,4,5-tetrahydrodipicolinate + NADPH + H(+). Its pathway is amino-acid biosynthesis; L-lysine biosynthesis via DAP pathway; (S)-tetrahydrodipicolinate from L-aspartate: step 4/4. Its function is as follows. Catalyzes the conversion of 4-hydroxy-tetrahydrodipicolinate (HTPA) to tetrahydrodipicolinate. The sequence is that of 4-hydroxy-tetrahydrodipicolinate reductase from Listeria monocytogenes serotype 4b (strain F2365).